A 309-amino-acid chain; its full sequence is D-alanine--D-alanine ligase (309 aa).

The ATP-grasp domain maps to 109–304 (KMVWAACGLP…FTALCLAILE (196 aa)). 135–190 (VAELGLPIFVKPVHEGSSMGATKVTAASQLKAAWERAARFDDLVLAEEFIVGAELT) contacts ATP. Residues D258, E271, and N273 each contribute to the Mg(2+) site.

It belongs to the D-alanine--D-alanine ligase family. The cofactor is Mg(2+). Mn(2+) is required as a cofactor.

The protein localises to the cytoplasm. It carries out the reaction 2 D-alanine + ATP = D-alanyl-D-alanine + ADP + phosphate + H(+). Its pathway is cell wall biogenesis; peptidoglycan biosynthesis. In terms of biological role, cell wall formation. The chain is D-alanine--D-alanine ligase from Aromatoleum aromaticum (strain DSM 19018 / LMG 30748 / EbN1) (Azoarcus sp. (strain EbN1)).